The chain runs to 1394 residues: Adhesion and penetration protein autotransporter (1394 aa).

An N-terminal signal peptide occupies residues 1–25; the sequence is MKKTVFRLNFLTACISLGIVSQAWA. The Peptidase S6 domain maps to 26-286; it reads GHTYFGIDYQ…QLVRKSYFDE (261 aa). Ser243 is a catalytic residue. Disordered stretches follow at residues 848–870 and 995–1027; these read AYSASSNNTPRRRSLETETTPTS and TLEAKQVEPTAKTQTGEPKVRSRRAARAAFPDT. An Autotransporter domain is found at 1140 to 1394; it reads VDQAQSAVWT…NVGVKLGYRW (255 aa).

Its subcellular location is the periplasm. The protein localises to the secreted. The protein resides in the cell surface. It localises to the cell outer membrane. Probable protease; promotes adherence and invasion by directly binding to a host cell structure. This is Adhesion and penetration protein autotransporter (hap) from Haemophilus influenzae.